We begin with the raw amino-acid sequence, 187 residues long: dCTP deaminase (187 aa).

DCTP contacts are provided by residues 110–115, 134–136, Gln155, Tyr169, and Gln179; these read KSTYAR and TLE. The Proton donor/acceptor role is filled by Glu136.

Belongs to the dCTP deaminase family. As to quaternary structure, homotrimer.

The enzyme catalyses dCTP + H2O + H(+) = dUTP + NH4(+). It participates in pyrimidine metabolism; dUMP biosynthesis; dUMP from dCTP (dUTP route): step 1/2. Catalyzes the deamination of dCTP to dUTP. This Bordetella bronchiseptica (strain ATCC BAA-588 / NCTC 13252 / RB50) (Alcaligenes bronchisepticus) protein is dCTP deaminase.